A 329-amino-acid chain; its full sequence is Small ribosomal subunit protein uS2 (329 aa).

It belongs to the universal ribosomal protein uS2 family.

In Bradyrhizobium sp. (strain ORS 278), this protein is Small ribosomal subunit protein uS2.